The sequence spans 181 residues: UPF0397 protein SSU98_0390 (181 aa).

Helical transmembrane passes span 9 to 29, 46 to 66, 70 to 90, 108 to 128, and 147 to 167; these read VVAT…INIP, LLAV…GHTL, LTYG…LVVG, ILFF…VIAP, and LVAG…LLVV.

The protein belongs to the UPF0397 family.

Its subcellular location is the cell membrane. The polypeptide is UPF0397 protein SSU98_0390 (Streptococcus suis (strain 98HAH33)).